The chain runs to 290 residues: Enoyl-CoA hydratase, mitochondrial (290 aa).

The transit peptide at 1–29 directs the protein to the mitochondrion; the sequence is MAALRALLPRACNSLLSPVRCPEFRRFAS. Position 98-101 (98-101) interacts with substrate; it reads ADIK. 2 positions are modified to N6-acetyllysine; alternate: Lys101 and Lys115. Lys101 and Lys115 each carry N6-succinyllysine; alternate. Gly141 contributes to the substrate binding site. Residue Lys204 is modified to N6-succinyllysine. The residue at position 211 (Lys211) is an N6-acetyllysine.

The protein belongs to the enoyl-CoA hydratase/isomerase family. Homohexamer; dimer of trimers. Detected in liver (at protein level).

Its subcellular location is the mitochondrion matrix. The catalysed reaction is a (3S)-3-hydroxyacyl-CoA = a (2E)-enoyl-CoA + H2O. It catalyses the reaction a (3E)-enoyl-CoA = a 4-saturated (2E)-enoyl-CoA. The enzyme catalyses (3E)-hexenoyl-CoA = (2E)-hexenoyl-CoA. It carries out the reaction (3S)-3-hydroxybutanoyl-CoA = (2E)-butenoyl-CoA + H2O. The catalysed reaction is 3-hydroxyisovaleryl-CoA = 3-methylbut-2-enoyl-CoA + H2O. It catalyses the reaction 3-hydroxypropanoyl-CoA = acryloyl-CoA + H2O. The enzyme catalyses 3-hydroxybutanoyl-CoA = (2E)-butenoyl-CoA + H2O. It carries out the reaction 2-methylpropenoyl-CoA + H2O = (S)-3-hydroxyisobutanoyl-CoA. The catalysed reaction is (3S)-hydroxyhexanoyl-CoA = (2E)-hexenoyl-CoA + H2O. It catalyses the reaction (3S)-hydroxydecanoyl-CoA = (2E)-decenoyl-CoA + H2O. It functions in the pathway lipid metabolism; fatty acid beta-oxidation. Its function is as follows. Converts unsaturated trans-2-enoyl-CoA species ((2E)-enoyl-CoA) to the corresponding 3(S)-3-hydroxyacyl-CoA species through addition of a water molecule to the double bond. Catalyzes the hydration of medium- and short-chained fatty enoyl-CoA thioesters from 4 carbons long (C4) up to C16. Has high substrate specificity for crotonyl-CoA ((2E)-butenoyl-CoA) and moderate specificity for acryloyl-CoA, 3-methylcrotonyl-CoA (3-methyl-(2E)-butenoyl-CoA) and methacrylyl-CoA ((2E)-2-methylpropenoyl-CoA). Can bind tiglyl-CoA (2-methylcrotonoyl-CoA), but hydrates only a small amount of this substrate. Plays a key role in the beta-oxidation spiral of short- and medium-chain fatty acid oxidation. At a lower rate than the hydratase reaction, catalyzes the isomerase reaction of trans-3-enoyl-CoA species (such as (3E)-hexenoyl-CoA) to trans-2-enoyl-CoA species (such as (2E)-hexenoyl-CoA), which are subsequently hydrated to 3(S)-3-hydroxyacyl-CoA species (such as (3S)-hydroxyhexanoyl-CoA). In Rattus norvegicus (Rat), this protein is Enoyl-CoA hydratase, mitochondrial.